Here is a 90-residue protein sequence, read N- to C-terminus: MINIKTFFKNIFKLNRLTSIKFYAWMPGSDDLRKTEFKLGLGPCGKVVTKLECYSTSSGMVIFQTTEDNEMKSFYYPKGSTCGRIERTYS.

This is an uncharacterized protein from Escherichia coli (Bacteriophage T3).